A 541-amino-acid chain; its full sequence is Methyl-accepting chemotaxis protein PcaY (541 aa).

The Cytoplasmic portion of the chain corresponds to Met-1–Gly-10. The chain crosses the membrane as a helical span at residues Met-11 to Trp-31. At Ala-32–Gln-189 the chain is on the periplasmic side. Residues Gly-35–Arg-187 form a ligand-binding domain region. The helical transmembrane segment at Leu-190–Ile-210 threads the bilayer. Residues Ala-211 to Val-541 lie on the Cytoplasmic side of the membrane. Residues Gln-212–Gly-264 enclose the HAMP domain. In terms of domain architecture, Methyl-accepting transducer spans Cys-269–Arg-505. Residues Thr-322–Ser-341 are disordered.

It belongs to the methyl-accepting chemotaxis (MCP) protein family.

It localises to the cell inner membrane. Chemotactic-signal transducers respond to changes in the concentration of attractants and repellents in the environment, transduce a signal from the outside to the inside of the cell, and facilitate sensory adaptation through the variation of the level of methylation. PcaY is responsible for the detection of multiple aromatic and hydroaromatic compounds that are metabolized through the beta-ketoadipate catabolic pathway, including vanillin, vanillate, 4-hydroxybenzoate (4-HBA), benzoate and protocatechuate. It also senses several nonmetabolizable aromatic compounds. This is Methyl-accepting chemotaxis protein PcaY from Pseudomonas putida (strain ATCC 700007 / DSM 6899 / JCM 31910 / BCRC 17059 / LMG 24140 / F1).